The primary structure comprises 503 residues: MDKKKEHPEMRIPLQTAVEVSDWPCSTSHDPHSGLGMVLGMLAVLGLSSVTLILFLWQGATSFTSHRMFPEEVPSWSWETLKGDAEQQNNSCQLILVESIPEDLPFAAGSPTAQPLAQAWLQLLDTARESVHIASYYWSLTGLDIGVNDSSSRQGEALLQKFQQLLLRNISVVVATHSPTLAKTSTDLQVLAAHGAQIRQVPMKQLTGGVLHSKFWVVDGRHIYVGSANMDWRSLTQVKELGAIIYNCSNLAQDLEKTFQTYWVLGTPQAVLPKTWPRNFSSHINRFHPLRGPFDGVPTTAYFSASPPSLCPHGRTRDLDAVLGVMEGARQFIYVSVMEYFPTTRFTHHARYWPVLDNALRAAALNKGVHVRLLVSCWFNTDPTMFAYLRSLQAFSNPSAGISVDVKVFIVPVGNHSNIPFSRVNHSKFMVTDKTAYVGTSNWSEDYFSHTAGVGLIVSQKTPRAQPGATTVQEQLRQLFERDWSSHYAMDLDRQVPSQDCVW.

At 1–36 (MDKKKEHPEMRIPLQTAVEVSDWPCSTSHDPHSGLG) the chain is on the cytoplasmic side. Residues 37 to 57 (MVLGMLAVLGLSSVTLILFLW) traverse the membrane as a signal-anchor for type II membrane protein segment. Residues 58–503 (QGATSFTSHR…RQVPSQDCVW (446 aa)) lie on the Lumenal side of the membrane. Asparagine 89, asparagine 148, and asparagine 169 each carry an N-linked (GlcNAc...) asparagine glycan. Cysteine 92 and cysteine 248 are joined by a disulfide. The PLD phosphodiesterase 1 domain occupies 207-234 (TGGVLHSKFWVVDGRHIYVGSANMDWRS). Residues histidine 212, lysine 214, and aspartate 219 contribute to the active site. Histidine 212 functions as the Proton donor in the catalytic mechanism. 4 N-linked (GlcNAc...) asparagine glycosylation sites follow: asparagine 247, asparagine 279, asparagine 415, and asparagine 425. An intrachain disulfide couples cysteine 377 to cysteine 501. The region spanning 421–447 (FSRVNHSKFMVTDKTAYVGTSNWSEDY) is the PLD phosphodiesterase 2 domain. Catalysis depends on residues histidine 426, lysine 428, and aspartate 433. Histidine 426 (nucleophile) is an active-site residue. Asparagine 442 carries an N-linked (GlcNAc...) asparagine glycan.

Belongs to the phospholipase D family. In terms of processing, highly N-glycosylated. Enriched in the white matter of early postnatal brains, as well as in splenic marginal zone cells. Highly expressed in dendritic cells (DCs) and other myeloid cells, with lower expression in B cell.

The protein resides in the endoplasmic reticulum membrane. The protein localises to the golgi apparatus. It localises to the trans-Golgi network membrane. It is found in the nucleus. Its subcellular location is the early endosome. The protein resides in the cytoplasmic vesicle. The protein localises to the phagosome. It localises to the lysosome. It catalyses the reaction Exonucleolytic cleavage in the 5'- to 3'-direction to yield nucleoside 3'-phosphates.. It carries out the reaction a 5'-end 5'-dephospho-ribonucleotidyl-ribonucleotide-RNA + H2O = a ribonucleoside 3'-phosphate + a 5'-end dephospho-ribonucleoside-RNA + H(+). The enzyme catalyses a ribonucleoside 3'-phosphate-2'-3'-cyclophospho-GMP + H2O = a ribonucleoside 3'-phosphate + 2',3'-cyclophospho-GMP + H(+). The catalysed reaction is a 5'-end 5'-dephospho-2'-deoxyribonucleotidyl-2'-deoxyribonucleotide in single-stranded DNA + H2O = a 5'-end dephospho-2'-deoxyribonucleoside in single-stranded DNA + a 2'-deoxyribonucleoside 3'-phosphate + H(+). It catalyses the reaction a 5'-end 5'-phospho-2'-deoxyribonucleotide in single-stranded DNA + H2O = a 5'-end 5'-dephospho-2'-deoxyribonucleotide in single-stranded DNA + phosphate. It carries out the reaction a 3-lyso-sn-glycero-1-phospho-(3'-acyl-1'-sn-glycerol) + a 1-acyl-sn-glycerol = a 3-acyl-sn-glycero-1-phospho-(3'-acyl-1'-sn-glycerol) + glycerol. The enzyme catalyses 3-lyso-sn-glycero-1-phospho-(3'-(9Z-octadecenoyl)-1'-sn-glycerol) + 1-(9Z-octadecenoyl)-sn-glycerol = 3-(9Z-octadecenoyl)-sn-glycero-1-phospho-(3'-(9Z-octadecenoyl)-1'-sn-glycerol) + glycerol. The exonuclease activity toward ssDNA substrate is Ca(2+) and Mg(2+)-independent, but it is inhibited by Fe(2+), Cu(2+) and to a lesser extent Zn(2+) ions. In terms of biological role, 5'-&gt;3' exonuclease that hydrolyzes the phosphodiester bond of single-stranded DNA (ssDNA) and RNA molecules to form nucleoside 3'-monophosphates and 5'-end 5'-hydroxy deoxyribonucleotide/ribonucleotide fragments. Partially redundant with PLD4, can cleave all four nucleotides displaying higher efficiency for ssDNA and RNA fragments initiated with uridine and guanosine residues and lower efficiency for cytidine-initiated substrates. As a result, it does not always degrade polynucleotides to the single nucleotide level, it can stall at specific sites sparing certain fragments from exonucleolytic degradation. Processes self and pathogenic ssDNA and RNA molecules that reach the endolysosomal compartment via phagocytosis or autophagy and may serve as 'danger' signals for recognition by innate immune receptors such as toll-like receptors (TLRs). Degrades mitochondrial CpG-rich ssDNA fragments to prevent TLR9 activation and autoinflammatory response, but it can cleave viral RNA to generate ligands for TLR7 activation and initiate antiviral immune responses. In plasmacytoid dendritic cells, it cooperates with endonuclease RNASET2 to release 2',3'-cyclic guanosine monophosphate (2',3'-cGMP), a potent stimulatory ligand for TLR7. Produces 2',3'-cGMPs and cytidine-rich RNA fragments that occupy TLR7 ligand-binding pockets and trigger a signaling-competent state. Can exert polynucleotide phosphatase activity toward 5'-phosphorylated ssDNA substrates although at a slow rate. Transphosphatidylase that catalyzes the exchange with R to S stereo-inversion of the glycerol moiety between (S,R)-lysophosphatidylglycerol (LPG) and monoacylglycerol (MAG) substrates to yield (S,S)-bis(monoacylglycero)phosphate (BMP). Can synthesize a variety of (S,S)-BMPs representing the main phospholipid constituent of lysosomal intralumenal vesicle (ILV) membranes that bind acid hydrolases for lipid degradation. Regulates the homeostasis and interorganellar communication of the endolysosomal system with an overall impact on cellular removal of dysfunctional organelles via autophagy as well as proper protein and lipid turnover. May play a role in myotube formation in response to ER stress. This Mus musculus (Mouse) protein is 5'-3' exonuclease PLD4.